A 496-amino-acid chain; its full sequence is Aldehyde dehydrogenase 1A1 (496 aa).

2 positions are modified to N6-acetyllysine: lysine 86 and lysine 123. NAD(+)-binding positions include 162 to 165 (IPWN), 188 to 191 (KPAE), 221 to 222 (GP), and 241 to 242 (GS). Lysine 247 is subject to N6-acetyllysine. The active-site Proton acceptor is the glutamate 264. 264 to 266 (ELG) contributes to the NAD(+) binding site. Cysteine 298 serves as the catalytic Nucleophile. The mediates interaction with PRMT3 stretch occupies residues 331-496 (LAPEVNQGPQ…VTVKISQKNS (166 aa)). NAD(+) is bound at residue 344–348 (EQYNK). An N6-acetyllysine mark is found at lysine 348 and lysine 362. 395 to 397 (EIF) provides a ligand contact to NAD(+). Lysine 405 carries the post-translational modification N6-acetyllysine. A Phosphoserine modification is found at serine 408. 3 positions are modified to N6-acetyllysine: lysine 414, lysine 430, and lysine 490.

The protein belongs to the aldehyde dehydrogenase family. Homotetramer. Interacts with PRMT3; the interaction is direct, inhibits ALDH1A1 aldehyde dehydrogenase activity and is independent of the methyltransferase activity of PRMT3. In terms of processing, the N-terminus is blocked most probably by acetylation.

The protein resides in the cytoplasm. It localises to the cytosol. The protein localises to the cell projection. It is found in the axon. It catalyses the reaction an aldehyde + NAD(+) + H2O = a carboxylate + NADH + 2 H(+). It carries out the reaction all-trans-retinal + NAD(+) + H2O = all-trans-retinoate + NADH + 2 H(+). The enzyme catalyses 9-cis-retinal + NAD(+) + H2O = 9-cis-retinoate + NADH + 2 H(+). The catalysed reaction is 11-cis-retinal + NAD(+) + H2O = 11-cis-retinoate + NADH + 2 H(+). It catalyses the reaction 13-cis-retinal + NAD(+) + H2O = 13-cis-retinoate + NADH + 2 H(+). It carries out the reaction (E)-4-hydroxynon-2-enal + NAD(+) + H2O = (E)-4-hydroxynon-2-enoate + NADH + 2 H(+). The enzyme catalyses malonaldehyde + NAD(+) + H2O = 3-oxopropanoate + NADH + 2 H(+). The catalysed reaction is hexanal + NAD(+) + H2O = hexanoate + NADH + 2 H(+). It catalyses the reaction propanal + NAD(+) + H2O = propanoate + NADH + 2 H(+). It carries out the reaction 3-deoxyglucosone + NAD(+) + H2O = 2-dehydro-3-deoxy-D-gluconate + NADH + 2 H(+). The enzyme catalyses acetaldehyde + NAD(+) + H2O = acetate + NADH + 2 H(+). The catalysed reaction is benzaldehyde + NAD(+) + H2O = benzoate + NADH + 2 H(+). It catalyses the reaction 4-aminobutanal + NAD(+) + H2O = 4-aminobutanoate + NADH + 2 H(+). Its pathway is cofactor metabolism; retinol metabolism. Cytosolic dehydrogenase that catalyzes the irreversible oxidation of a wide range of aldehydes to their corresponding carboxylic acid. Functions downstream of retinol dehydrogenases and catalyzes the oxidation of retinaldehyde into retinoic acid, the second step in the oxidation of retinol/vitamin A into retinoic acid. This pathway is crucial to control the levels of retinol and retinoic acid, two important molecules which excess can be teratogenic and cytotoxic. Also oxidizes aldehydes resulting from lipid peroxidation like (E)-4-hydroxynon-2-enal/HNE, malonaldehyde and hexanal that form protein adducts and are highly cytotoxic. By participating for instance to the clearance of (E)-4-hydroxynon-2-enal/HNE in the lens epithelium prevents the formation of HNE-protein adducts and lens opacification. Functions also downstream of fructosamine-3-kinase in the fructosamine degradation pathway by catalyzing the oxidation of 3-deoxyglucosone, the carbohydrate product of fructosamine 3-phosphate decomposition, which is itself a potent glycating agent that may react with lysine and arginine side-chains of proteins. Also has an aminobutyraldehyde dehydrogenase activity and is probably part of an alternative pathway for the biosynthesis of GABA/4-aminobutanoate in midbrain, thereby playing a role in GABAergic synaptic transmission. The protein is Aldehyde dehydrogenase 1A1 of Oryctolagus cuniculus (Rabbit).